Here is a 398-residue protein sequence, read N- to C-terminus: tRNA-specific 2-thiouridylase MnmA (398 aa).

Residues 18-25 (AMSGGVDS) and L44 each bind ATP. C112 functions as the Nucleophile in the catalytic mechanism. C112 and C213 are joined by a disulfide. G136 serves as a coordination point for ATP. The tract at residues 163–165 (RDQ) is interaction with tRNA. C213 serves as the catalytic Cysteine persulfide intermediate.

The protein belongs to the MnmA/TRMU family.

The protein resides in the cytoplasm. It catalyses the reaction S-sulfanyl-L-cysteinyl-[protein] + uridine(34) in tRNA + AH2 + ATP = 2-thiouridine(34) in tRNA + L-cysteinyl-[protein] + A + AMP + diphosphate + H(+). In terms of biological role, catalyzes the 2-thiolation of uridine at the wobble position (U34) of tRNA, leading to the formation of s(2)U34. The sequence is that of tRNA-specific 2-thiouridylase MnmA from Sinorhizobium fredii (strain NBRC 101917 / NGR234).